We begin with the raw amino-acid sequence, 471 residues long: Argininosuccinate lyase (471 aa).

The protein belongs to the lyase 1 family. Argininosuccinate lyase subfamily.

Its subcellular location is the cytoplasm. The enzyme catalyses 2-(N(omega)-L-arginino)succinate = fumarate + L-arginine. It functions in the pathway amino-acid biosynthesis; L-arginine biosynthesis; L-arginine from L-ornithine and carbamoyl phosphate: step 3/3. This Parasynechococcus marenigrum (strain WH8102) protein is Argininosuccinate lyase.